Consider the following 529-residue polypeptide: Retinoic acid-induced protein 2 (529 aa).

Disordered stretches follow at residues Met1 to Ala21 and Ser400 to Ser419. Polar residues predominate over residues Gly407–His416.

This chain is Retinoic acid-induced protein 2 (Rai2), found in Mus musculus (Mouse).